Consider the following 513-residue polypeptide: Acetylcholine receptor subunit delta (513 aa).

The signal sequence occupies residues 1–18; that stretch reads MAVLLALFGALVLSGGLC. Over 19-244 the chain is Extracellular; it reads VNQEERLIHH…ITFYLIIKRK (226 aa). Residues asparagine 88 and asparagine 161 are each glycosylated (N-linked (GlcNAc...) asparagine). A disulfide bridge links cysteine 148 with cysteine 162. The next 3 membrane-spanning stretches (helical) occupy residues 245–269, 277–295, and 311–332; these read PLFY…VFYL, MTLV…LLVS, and YLLF…VLNF. Over 333–467 the chain is Cytoplasmic; that stretch reads HFRTPSTHVM…WNRVARTLDR (135 aa). Tyrosine 388 carries the post-translational modification Phosphotyrosine; by Tyr-kinases. A helical membrane pass occupies residues 468-490; it reads LCLFLITPMLVVGTLWIFLMGIY.

Belongs to the ligand-gated ion channel (TC 1.A.9) family. Acetylcholine receptor (TC 1.A.9.1) subfamily. As to quaternary structure, pentamer of two alpha chains, and one each of the beta, delta, and gamma chains.

It localises to the postsynaptic cell membrane. The protein localises to the cell membrane. It catalyses the reaction K(+)(in) = K(+)(out). The enzyme catalyses Na(+)(in) = Na(+)(out). Its function is as follows. After binding acetylcholine, the AChR responds by an extensive change in conformation that affects all subunits and leads to opening of an ion-conducting channel across the plasma membrane. The sequence is that of Acetylcholine receptor subunit delta (CHRND) from Gallus gallus (Chicken).